A 198-amino-acid chain; its full sequence is Putative pseudouridine methyltransferase (198 aa).

S-adenosyl-L-methionine is bound by residues L132 and C186.

This sequence belongs to the methyltransferase superfamily. TrmY family.

Its subcellular location is the cytoplasm. The protein is Putative pseudouridine methyltransferase of Shewanella frigidimarina (strain NCIMB 400).